The sequence spans 217 residues: Ribosomal RNA small subunit methyltransferase G (217 aa).

S-adenosyl-L-methionine-binding positions include glycine 78, phenylalanine 83, 129–130 (AE), and arginine 146.

It belongs to the methyltransferase superfamily. RNA methyltransferase RsmG family.

The protein resides in the cytoplasm. The catalysed reaction is guanosine(527) in 16S rRNA + S-adenosyl-L-methionine = N(7)-methylguanosine(527) in 16S rRNA + S-adenosyl-L-homocysteine. Specifically methylates the N7 position of guanine in position 527 of 16S rRNA. The chain is Ribosomal RNA small subunit methyltransferase G from Geobacter sp. (strain M21).